Consider the following 269-residue polypeptide: 4-hydroxy-tetrahydrodipicolinate reductase (269 aa).

NAD(+)-binding positions include 11–16 and glutamate 37; that span reads GGSGRM. Arginine 38 serves as a coordination point for NADP(+). NAD(+)-binding positions include 101-103 and 125-128; these read GTT and AGNM. Histidine 158 serves as the catalytic Proton donor/acceptor. Histidine 159 lines the (S)-2,3,4,5-tetrahydrodipicolinate pocket. The active-site Proton donor is the lysine 162. 168-169 serves as a coordination point for (S)-2,3,4,5-tetrahydrodipicolinate; the sequence is GT.

The protein belongs to the DapB family.

The protein resides in the cytoplasm. It catalyses the reaction (S)-2,3,4,5-tetrahydrodipicolinate + NAD(+) + H2O = (2S,4S)-4-hydroxy-2,3,4,5-tetrahydrodipicolinate + NADH + H(+). The catalysed reaction is (S)-2,3,4,5-tetrahydrodipicolinate + NADP(+) + H2O = (2S,4S)-4-hydroxy-2,3,4,5-tetrahydrodipicolinate + NADPH + H(+). It functions in the pathway amino-acid biosynthesis; L-lysine biosynthesis via DAP pathway; (S)-tetrahydrodipicolinate from L-aspartate: step 4/4. In terms of biological role, catalyzes the conversion of 4-hydroxy-tetrahydrodipicolinate (HTPA) to tetrahydrodipicolinate. The protein is 4-hydroxy-tetrahydrodipicolinate reductase of Dinoroseobacter shibae (strain DSM 16493 / NCIMB 14021 / DFL 12).